A 144-amino-acid chain; its full sequence is Transcription antitermination protein NusB (144 aa).

Belongs to the NusB family.

In terms of biological role, involved in transcription antitermination. Required for transcription of ribosomal RNA (rRNA) genes. Binds specifically to the boxA antiterminator sequence of the ribosomal RNA (rrn) operons. The sequence is that of Transcription antitermination protein NusB from Pelotomaculum thermopropionicum (strain DSM 13744 / JCM 10971 / SI).